Here is a 232-residue protein sequence, read N- to C-terminus: Leucyl/phenylalanyl-tRNA--protein transferase (232 aa).

It belongs to the L/F-transferase family.

It is found in the cytoplasm. It catalyses the reaction N-terminal L-lysyl-[protein] + L-leucyl-tRNA(Leu) = N-terminal L-leucyl-L-lysyl-[protein] + tRNA(Leu) + H(+). It carries out the reaction N-terminal L-arginyl-[protein] + L-leucyl-tRNA(Leu) = N-terminal L-leucyl-L-arginyl-[protein] + tRNA(Leu) + H(+). The enzyme catalyses L-phenylalanyl-tRNA(Phe) + an N-terminal L-alpha-aminoacyl-[protein] = an N-terminal L-phenylalanyl-L-alpha-aminoacyl-[protein] + tRNA(Phe). Functionally, functions in the N-end rule pathway of protein degradation where it conjugates Leu, Phe and, less efficiently, Met from aminoacyl-tRNAs to the N-termini of proteins containing an N-terminal arginine or lysine. The sequence is that of Leucyl/phenylalanyl-tRNA--protein transferase from Nitrosospira multiformis (strain ATCC 25196 / NCIMB 11849 / C 71).